Here is a 152-residue protein sequence, read N- to C-terminus: Deoxyuridine 5'-triphosphate nucleotidohydrolase (152 aa).

Residues 72–74 (RSG), N85, and 89–91 (TID) contribute to the substrate site.

Belongs to the dUTPase family. The cofactor is Mg(2+).

It catalyses the reaction dUTP + H2O = dUMP + diphosphate + H(+). It functions in the pathway pyrimidine metabolism; dUMP biosynthesis; dUMP from dCTP (dUTP route): step 2/2. In terms of biological role, this enzyme is involved in nucleotide metabolism: it produces dUMP, the immediate precursor of thymidine nucleotides and it decreases the intracellular concentration of dUTP so that uracil cannot be incorporated into DNA. The sequence is that of Deoxyuridine 5'-triphosphate nucleotidohydrolase from Rhodopseudomonas palustris (strain BisB18).